The chain runs to 345 residues: S-adenosylmethionine:tRNA ribosyltransferase-isomerase (345 aa).

The protein belongs to the QueA family. In terms of assembly, monomer.

It is found in the cytoplasm. It carries out the reaction 7-aminomethyl-7-carbaguanosine(34) in tRNA + S-adenosyl-L-methionine = epoxyqueuosine(34) in tRNA + adenine + L-methionine + 2 H(+). Its pathway is tRNA modification; tRNA-queuosine biosynthesis. Transfers and isomerizes the ribose moiety from AdoMet to the 7-aminomethyl group of 7-deazaguanine (preQ1-tRNA) to give epoxyqueuosine (oQ-tRNA). The protein is S-adenosylmethionine:tRNA ribosyltransferase-isomerase of Acidithiobacillus ferrooxidans (strain ATCC 53993 / BNL-5-31) (Leptospirillum ferrooxidans (ATCC 53993)).